Here is a 279-residue protein sequence, read N- to C-terminus: Undecaprenyl-diphosphatase (279 aa).

The next 8 helical transmembrane spans lie at Leu-2–Leu-22, Ala-44–Ile-64, Trp-85–Leu-105, Phe-113–Ile-133, Val-163–Leu-183, Thr-188–Leu-208, Ala-223–Ile-243, and Phe-255–Phe-275.

This sequence belongs to the UppP family.

Its subcellular location is the cell membrane. It catalyses the reaction di-trans,octa-cis-undecaprenyl diphosphate + H2O = di-trans,octa-cis-undecaprenyl phosphate + phosphate + H(+). Its function is as follows. Catalyzes the dephosphorylation of undecaprenyl diphosphate (UPP). Confers resistance to bacitracin. This is Undecaprenyl-diphosphatase from Streptococcus pyogenes serotype M5 (strain Manfredo).